A 351-amino-acid polypeptide reads, in one-letter code: MNVAIVGATGYGGIQAVNLLKKNKNYKISFLGGNKTSGLKWNDNFPFIYLDNDPYIEEISVDNISKNADVALLCLPNGLSSTLTRKLLDKGLKVIDLSADYRYKSLDEWKKVYSKEAAIYKRNDDDLCKEAVYGLPEINKEAISKGRLIACPGCYPTSALIPLAPYLSQGIIENEGIVIDSKSGTSGGGREPNQKLLLSECGEGLSAYGLINHRHTSEIEQVASLISGTKIELLFTPHLVPISRGMHSTIYGRLRDPGLTSDDCRILLDNYYRNFKNIKVLPVDTFPSTKWVKNTNQILLSVKVDNRNGRIIILSVIDNLLKGQTGQAIQNLNIMSGFSMDEGLDLTNNFP.

The active site involves Cys-154.

The protein belongs to the NAGSA dehydrogenase family. Type 1 subfamily.

The protein localises to the cytoplasm. The catalysed reaction is N-acetyl-L-glutamate 5-semialdehyde + phosphate + NADP(+) = N-acetyl-L-glutamyl 5-phosphate + NADPH + H(+). It functions in the pathway amino-acid biosynthesis; L-arginine biosynthesis; N(2)-acetyl-L-ornithine from L-glutamate: step 3/4. Catalyzes the NADPH-dependent reduction of N-acetyl-5-glutamyl phosphate to yield N-acetyl-L-glutamate 5-semialdehyde. The chain is N-acetyl-gamma-glutamyl-phosphate reductase from Prochlorococcus marinus (strain MIT 9301).